A 235-amino-acid chain; its full sequence is Small ribosomal subunit protein uS2 (235 aa).

The protein belongs to the universal ribosomal protein uS2 family.

In Geobacillus kaustophilus (strain HTA426), this protein is Small ribosomal subunit protein uS2.